We begin with the raw amino-acid sequence, 316 residues long: GMP reductase (316 aa).

The active-site Thioimidate intermediate is Cys-175. 202–225 contacts NADP(+); sequence VIADGGIVEHGDIAKALVCGATMV.

Belongs to the IMPDH/GMPR family. GuaC type 2 subfamily.

It catalyses the reaction IMP + NH4(+) + NADP(+) = GMP + NADPH + 2 H(+). Catalyzes the irreversible NADPH-dependent deamination of GMP to IMP. It functions in the conversion of nucleobase, nucleoside and nucleotide derivatives of G to A nucleotides, and in maintaining the intracellular balance of A and G nucleotides. The polypeptide is GMP reductase (Chromobacterium violaceum (strain ATCC 12472 / DSM 30191 / JCM 1249 / CCUG 213 / NBRC 12614 / NCIMB 9131 / NCTC 9757 / MK)).